A 331-amino-acid chain; its full sequence is Protein FLX-like 1 (331 aa).

The segment at 1–51 is disordered; it reads MSGRNRGPPPPSMKGGSYSGLQAPVHQPPFVRGLGGGPVPPPPHPSMIDDS. A coiled-coil region spans residues 69-252; the sequence is ILEDRLAAQN…AEIANSETSA (184 aa). Positions 306–321 are enriched in low complexity; the sequence is QAAWAGGYDPQQQQQQ. Positions 306–331 are disordered; sequence QAAWAGGYDPQQQQQQQPPPQGQGHR. Over residues 322–331 the composition is skewed to pro residues; sequence QPPPQGQGHR.

The protein belongs to the FLX family. Interacts with FRI.

Has no transcriptional activation activity. In Arabidopsis thaliana (Mouse-ear cress), this protein is Protein FLX-like 1 (FLXL1).